The following is a 263-amino-acid chain: ABC transporter I family member 17 (263 aa).

The 232-residue stretch at 29 to 260 folds into the ABC transporter domain; it reads IRVHDLTRVA…THPMAQRFLQ (232 aa). Residue 62–69 participates in ATP binding; the sequence is GPSGSGKS.

Belongs to the ABC transporter superfamily. ABCI family.

The sequence is that of ABC transporter I family member 17 (ABCI17) from Arabidopsis thaliana (Mouse-ear cress).